The sequence spans 294 residues: Elongation factor Ts (294 aa).

The segment at 82-85 is involved in Mg(2+) ion dislocation from EF-Tu; it reads TDFV.

The protein belongs to the EF-Ts family.

It localises to the cytoplasm. Associates with the EF-Tu.GDP complex and induces the exchange of GDP to GTP. It remains bound to the aminoacyl-tRNA.EF-Tu.GTP complex up to the GTP hydrolysis stage on the ribosome. The chain is Elongation factor Ts from Psychrobacter cryohalolentis (strain ATCC BAA-1226 / DSM 17306 / VKM B-2378 / K5).